Reading from the N-terminus, the 267-residue chain is Thiamine thiazole synthase (267 aa).

NAD(+)-binding positions include S41, 60–61 (ER), G68, V132, and 160–162 (HVD). Fe cation is bound by residues D162 and H177. Residue M227 participates in NAD(+) binding. R237 contacts glycine.

Belongs to the THI4 family. Homooctamer; tetramer of dimers. Requires Fe(2+) as cofactor.

It carries out the reaction hydrogen sulfide + glycine + NAD(+) = ADP-5-ethyl-4-methylthiazole-2-carboxylate + nicotinamide + 3 H2O + H(+). It participates in cofactor biosynthesis; thiamine diphosphate biosynthesis. Functionally, involved in the biosynthesis of the thiazole moiety of thiamine. Catalyzes the conversion of NAD and glycine to adenosine diphosphate 5-(2-hydroxyethyl)-4-methylthiazole-2-carboxylate (ADT), an adenylated thiazole intermediate, using free sulfide as a source of sulfur. In Saccharolobus islandicus (strain L.S.2.15 / Lassen #1) (Sulfolobus islandicus), this protein is Thiamine thiazole synthase.